Consider the following 569-residue polypeptide: Endonuclease/exonuclease/phosphatase family domain-containing protein 1 (569 aa).

The segment at Met-1–His-20 is disordered. Gly-2 carries the N-myristoyl glycine lipid modification. The segment covering Ile-11–His-20 has biased composition (basic and acidic residues). Phosphoserine occurs at positions 16, 21, and 25. In terms of domain architecture, HhH spans Glu-38 to Tyr-67. Phosphoserine occurs at positions 106, 110, 160, and 173. Residues Ser-200–Ser-225 are disordered. The segment covering Pro-202–Leu-211 has biased composition (polar residues). At Thr-265 the chain carries Phosphothreonine. Position 428 is a phosphoserine (Ser-428). The disordered stretch occupies residues Ser-545 to Arg-569. Positions Glu-559–Arg-569 are enriched in basic and acidic residues.

The sequence is that of Endonuclease/exonuclease/phosphatase family domain-containing protein 1 (EEPD1) from Homo sapiens (Human).